The following is a 171-amino-acid chain: Protein GrpE (171 aa).

The segment at 1 to 22 is disordered; that stretch reads MNHEHPDIESQQSAADAAAAAG.

Belongs to the GrpE family. Homodimer.

Its subcellular location is the cytoplasm. Its function is as follows. Participates actively in the response to hyperosmotic and heat shock by preventing the aggregation of stress-denatured proteins, in association with DnaK and GrpE. It is the nucleotide exchange factor for DnaK and may function as a thermosensor. Unfolded proteins bind initially to DnaJ; upon interaction with the DnaJ-bound protein, DnaK hydrolyzes its bound ATP, resulting in the formation of a stable complex. GrpE releases ADP from DnaK; ATP binding to DnaK triggers the release of the substrate protein, thus completing the reaction cycle. Several rounds of ATP-dependent interactions between DnaJ, DnaK and GrpE are required for fully efficient folding. The protein is Protein GrpE of Stenotrophomonas maltophilia (strain R551-3).